A 164-amino-acid polypeptide reads, in one-letter code: Transcription elongation factor GreA (164 aa).

Positions 50-76 form a coiled coil; it reads YHAAREEQGQQEARIRQLQDLLSNAKV.

The protein belongs to the GreA/GreB family.

In terms of biological role, necessary for efficient RNA polymerase transcription elongation past template-encoded arresting sites. The arresting sites in DNA have the property of trapping a certain fraction of elongating RNA polymerases that pass through, resulting in locked ternary complexes. Cleavage of the nascent transcript by cleavage factors such as GreA or GreB allows the resumption of elongation from the new 3'terminus. GreA releases sequences of 2 to 3 nucleotides. In Mycobacterium bovis (strain ATCC BAA-935 / AF2122/97), this protein is Transcription elongation factor GreA.